A 128-amino-acid polypeptide reads, in one-letter code: Glycine cleavage system H protein (128 aa).

Residues 25–107 (TITVGITHHA…YGAGWFFKLK (83 aa)) enclose the Lipoyl-binding domain. K66 carries the post-translational modification N6-lipoyllysine.

It belongs to the GcvH family. The glycine cleavage system is composed of four proteins: P, T, L and H. Requires (R)-lipoate as cofactor.

Functionally, the glycine cleavage system catalyzes the degradation of glycine. The H protein shuttles the methylamine group of glycine from the P protein to the T protein. The protein is Glycine cleavage system H protein of Neisseria meningitidis serogroup B (strain ATCC BAA-335 / MC58).